The primary structure comprises 375 residues: Queuine tRNA-ribosyltransferase (375 aa).

Asp-90 serves as the catalytic Proton acceptor. Substrate is bound by residues 90–94 (DSGGF), Asp-144, Gln-193, and Gly-220. Positions 251–257 (GVGTPED) are RNA binding. Asp-270 functions as the Nucleophile in the catalytic mechanism. Positions 275–279 (TRNAR) are RNA binding; important for wobble base 34 recognition. Zn(2+) contacts are provided by Cys-308, Cys-310, Cys-313, and His-339.

It belongs to the queuine tRNA-ribosyltransferase family. In terms of assembly, homodimer. Within each dimer, one monomer is responsible for RNA recognition and catalysis, while the other monomer binds to the replacement base PreQ1. Zn(2+) serves as cofactor.

The catalysed reaction is 7-aminomethyl-7-carbaguanine + guanosine(34) in tRNA = 7-aminomethyl-7-carbaguanosine(34) in tRNA + guanine. The protein operates within tRNA modification; tRNA-queuosine biosynthesis. Its function is as follows. Catalyzes the base-exchange of a guanine (G) residue with the queuine precursor 7-aminomethyl-7-deazaguanine (PreQ1) at position 34 (anticodon wobble position) in tRNAs with GU(N) anticodons (tRNA-Asp, -Asn, -His and -Tyr). Catalysis occurs through a double-displacement mechanism. The nucleophile active site attacks the C1' of nucleotide 34 to detach the guanine base from the RNA, forming a covalent enzyme-RNA intermediate. The proton acceptor active site deprotonates the incoming PreQ1, allowing a nucleophilic attack on the C1' of the ribose to form the product. After dissociation, two additional enzymatic reactions on the tRNA convert PreQ1 to queuine (Q), resulting in the hypermodified nucleoside queuosine (7-(((4,5-cis-dihydroxy-2-cyclopenten-1-yl)amino)methyl)-7-deazaguanosine). The sequence is that of Queuine tRNA-ribosyltransferase from Herminiimonas arsenicoxydans.